The following is a 440-amino-acid chain: MAKTGMYVGLDIGTTSVKVVVAEYIEGQMNIIGVGNAKSDGLNRGIVVDIDQTVQAIQRAVRQAEEKAGIQIKSVNVGLPANLLEVESCQGMIAVSSESKEITDEDVRNVASAALVRSTPPERQIVAILPQDFTVDGFEGIKDPRGMLGVRMEMFGVVYTGPKTIIHNIRKCVEKAGLGINELVITPLALTETILTDGEKDFGTIVIDMGGGQTTTSVIHDKQLKFTHVNQEGGEFITKDISIVLNTSFNNAEALKINYGDAYPERTSANEEFPVDVIGKSEPVRVDERYLSEIIEARVEQILRKSKEVLDEIDAFELPGGVVLTGGAASMPGIVDLAQEIFEANVKLYVPNHMGLRNPVFANVISIVEYSAQLNDIYHIAKYAIPGEKSKPAQSVAVQQEVRYDTYAEQPQEEYEEFNERESGEKVTGKIKDFFSNIFD.

It belongs to the FtsA/MreB family. In terms of assembly, self-interacts. Interacts with FtsZ.

The protein resides in the cell membrane. Cell division protein that is involved in the assembly of the Z ring. May serve as a membrane anchor for the Z ring. The sequence is that of Cell division protein FtsA from Enterococcus faecalis (strain ATCC 700802 / V583).